Consider the following 170-residue polypeptide: Ecotin (170 aa).

Positions 1–21 (MNKASVVFSGLLMAVSASAIA) are cleaved as a signal peptide. A disulfide bridge links cysteine 78 with cysteine 115.

The protein belongs to the protease inhibitor I11 (ecotin) family. Homodimer.

Its subcellular location is the periplasm. Functionally, general inhibitor of pancreatic serine proteases: inhibits chymotrypsin, trypsin, elastases, factor X, kallikrein as well as a variety of other proteases. This chain is Ecotin, found in Serratia proteamaculans (strain 568).